We begin with the raw amino-acid sequence, 285 residues long: ATP synthase gamma chain (285 aa).

This sequence belongs to the ATPase gamma chain family. In terms of assembly, F-type ATPases have 2 components, CF(1) - the catalytic core - and CF(0) - the membrane proton channel. CF(1) has five subunits: alpha(3), beta(3), gamma(1), delta(1), epsilon(1). CF(0) has three main subunits: a, b and c.

It localises to the cell membrane. Produces ATP from ADP in the presence of a proton gradient across the membrane. The gamma chain is believed to be important in regulating ATPase activity and the flow of protons through the CF(0) complex. The protein is ATP synthase gamma chain of Clostridium novyi (strain NT).